The following is a 409-amino-acid chain: tRNA-specific 2-thiouridylase MnmA (409 aa).

Residues 40–47 (GLSGGVDS) and Leu-66 contribute to the ATP site. Cys-127 functions as the Nucleophile in the catalytic mechanism. Cys-127 and Cys-237 are disulfide-bonded. ATP is bound at residue Gly-152. A disordered region spans residues 156–179 (RIRHREDPEPQQALPGDSSGRHQL). The interval 187-189 (KDQ) is interaction with tRNA. The active-site Cysteine persulfide intermediate is Cys-237. The interaction with tRNA stretch occupies residues 342–343 (RY).

It belongs to the MnmA/TRMU family.

The protein localises to the cytoplasm. It catalyses the reaction S-sulfanyl-L-cysteinyl-[protein] + uridine(34) in tRNA + AH2 + ATP = 2-thiouridine(34) in tRNA + L-cysteinyl-[protein] + A + AMP + diphosphate + H(+). Catalyzes the 2-thiolation of uridine at the wobble position (U34) of tRNA, leading to the formation of s(2)U34. The sequence is that of tRNA-specific 2-thiouridylase MnmA from Prochlorococcus marinus (strain MIT 9303).